The primary structure comprises 218 residues: Probable 2-aminoethanethiol dioxygenase (218 aa).

Requires Fe cation as cofactor.

The enzyme catalyses cysteamine + O2 = hypotaurine + H(+). This chain is Probable 2-aminoethanethiol dioxygenase (ado-1), found in Dictyostelium discoideum (Social amoeba).